The sequence spans 511 residues: MFS-type transporper mpsC (511 aa).

Residues 1 to 35 (MTSSTESKHSNDESTDLEKQDAEESHGLPEERKQD) are compositionally biased toward basic and acidic residues. Residues 1 to 65 (MTSSTESKHS…PDDPANPMNW (65 aa)) form a disordered region. A run of 7 helical transmembrane segments spans residues 74-94 (VVMA…FAPA), 108-128 (ITAA…PLVI), 147-167 (ITVA…FLVF), 169-189 (LITG…IADV), 201-221 (AFAM…GFIA), 228-248 (WVFR…YFVM), and 303-323 (PITL…ILLF). N-linked (GlcNAc...) asparagine glycosylation occurs at asparagine 337. 5 helical membrane passes run 342 to 362 (GLSY…FGML), 383 to 403 (LLLM…YGWT), 411 to 431 (ILPM…MMPI), 443 to 465 (VAAS…LPLA), and 476 to 496 (GWGN…PILF).

It belongs to the major facilitator superfamily.

It localises to the membrane. Functionally, MFS-type transporper; part of the gene cluster that mediates the biosynthesis of macrophasetins, 3-decalinoyltetramic acids (DTAs) which feature a tetramate (pyrrolidine-2,4-dione) unit connected to a decalin fragment and that have potent bioactivities. Efflux pump that might be required for efficient secretion of macrophasetins. The protein is MFS-type transporper mpsC of Macrophomina phaseolina (strain MS6) (Charcoal rot fungus).